Reading from the N-terminus, the 197-residue chain is Adenine phosphoribosyltransferase (197 aa).

This sequence belongs to the purine/pyrimidine phosphoribosyltransferase family. In terms of assembly, homodimer.

The protein localises to the cytoplasm. It carries out the reaction AMP + diphosphate = 5-phospho-alpha-D-ribose 1-diphosphate + adenine. It participates in purine metabolism; AMP biosynthesis via salvage pathway; AMP from adenine: step 1/1. Functionally, catalyzes a salvage reaction resulting in the formation of AMP, that is energically less costly than de novo synthesis. The chain is Adenine phosphoribosyltransferase from Ralstonia nicotianae (strain ATCC BAA-1114 / GMI1000) (Ralstonia solanacearum).